Here is a 434-residue protein sequence, read N- to C-terminus: MKLIIFLTVTLCTLVTGLDSVYIRQYYKLSHKHRPQHRECQCLNGGTCITYRFFSQIKRCLCPEGYGGLHCEIDTNSICYSGNGEDYRGMAEDPGCLYWDHPSVIRWGDYHADLKNALQLGLGKHNYCRNPNGRSRPWCYTKRRYSIQETPCSTIEKCERTCGQRSFSKYFKIVGGSQAEVETQPWIAGIFQNIMGTDQFLCGGSLIDPCWVLTAAHCFYNPTKKQPNKSVYKVFLGKSILNTNDEHEQVFMVDEIISHPDFTDHTGGNDNDIALIRIRTASGQCAVESNYVRTVCLPEKNLNLYDNTWCEIAGYGKQNSYDIYYAQRLMSATVNLISQDDCKNKYYDSTRVTDNMVCAGDPLWETDACKGDSGGPMVCEHNGRMTLYGIVSWGDGCAKKNKPGVYTRVTRYLNWIDSNMNAVFTKSRSFREPK.

Positions 1 to 20 (MKLIIFLTVTLCTLVTGLDS) are cleaved as a signal peptide. Residues 36-72 (QHRECQCLNGGTCITYRFFSQIKRCLCPEGYGGLHCE) enclose the EGF-like domain. 12 cysteine pairs are disulfide-bonded: C40–C48, C42–C60, C62–C71, C79–C158, C96–C139, C128–C152, C162–C296, C202–C218, C210–C285, C310–C379, C342–C358, and C369–C397. The region spanning 79–158 (CYSGNGEDYR…ETPCSTIEKC (80 aa)) is the Kringle domain. The connecting peptide stretch occupies residues 159–172 (ERTCGQRSFSKYFK). Residues 173–421 (IVGGSQAEVE…YLNWIDSNMN (249 aa)) enclose the Peptidase S1 domain. The active-site Charge relay system is H217. An N-linked (GlcNAc...) asparagine glycan is attached at N228. D272 acts as the Charge relay system in catalysis. S373 (charge relay system) is an active-site residue.

This sequence belongs to the peptidase S1 family.

The protein localises to the secreted. The enzyme catalyses Specific cleavage of Arg-|-Val bond in plasminogen to form plasmin.. Its function is as follows. Specifically cleaves the zymogen plasminogen to form the active enzyme plasmin. The protein is Urokinase-type plasminogen activator (PLAU) of Gallus gallus (Chicken).